The chain runs to 397 residues: S-adenosylmethionine synthase (397 aa).

Residue H16 coordinates ATP. D18 contributes to the Mg(2+) binding site. E44 contributes to the K(+) binding site. L-methionine contacts are provided by E57 and Q100. A flexible loop region spans residues 100-110; sequence QSPDIAQGVNE. Residues 175-177, 242-243, D251, 257-258, A274, and K278 each bind ATP; these read DAK, RF, and RK. D251 lines the L-methionine pocket. K282 serves as a coordination point for L-methionine.

It belongs to the AdoMet synthase family. As to quaternary structure, homotetramer; dimer of dimers. The cofactor is Mg(2+). Requires K(+) as cofactor.

The protein resides in the cytoplasm. The catalysed reaction is L-methionine + ATP + H2O = S-adenosyl-L-methionine + phosphate + diphosphate. The protein operates within amino-acid biosynthesis; S-adenosyl-L-methionine biosynthesis; S-adenosyl-L-methionine from L-methionine: step 1/1. Its function is as follows. Catalyzes the formation of S-adenosylmethionine (AdoMet) from methionine and ATP. The overall synthetic reaction is composed of two sequential steps, AdoMet formation and the subsequent tripolyphosphate hydrolysis which occurs prior to release of AdoMet from the enzyme. The polypeptide is S-adenosylmethionine synthase (Streptococcus thermophilus (strain CNRZ 1066)).